A 496-amino-acid polypeptide reads, in one-letter code: UDP-glycosyltransferase 73C4 (496 aa).

Residues Ser-297, 357-359, 374-382, and 396-399 each bind UDP-alpha-D-glucose; these read SPQ, HCGWNSTLE, and FGDQ. The segment at 450–475 is disordered; the sequence is SDDAKERRRRVKELGESAHKAVEEGG. Over residues 451 to 472 the composition is skewed to basic and acidic residues; the sequence is DDAKERRRRVKELGESAHKAVE.

This sequence belongs to the UDP-glycosyltransferase family.

The polypeptide is UDP-glycosyltransferase 73C4 (UGT73C4) (Arabidopsis thaliana (Mouse-ear cress)).